The primary structure comprises 171 residues: 6,7-dimethyl-8-ribityllumazine synthase (171 aa).

5-amino-6-(D-ribitylamino)uracil-binding positions include phenylalanine 24, 58 to 60 (ALE), and 82 to 84 (AVI). Position 87-88 (87-88 (ET)) interacts with (2S)-2-hydroxy-3-oxobutyl phosphate. The active-site Proton donor is histidine 90. Asparagine 115 is a 5-amino-6-(D-ribitylamino)uracil binding site. Arginine 129 provides a ligand contact to (2S)-2-hydroxy-3-oxobutyl phosphate. The disordered stretch occupies residues 150–171 (ALDQLGDDEDEEEDEEDEEERA). Positions 154 to 171 (LGDDEDEEEDEEDEEERA) are enriched in acidic residues.

This sequence belongs to the DMRL synthase family.

It carries out the reaction (2S)-2-hydroxy-3-oxobutyl phosphate + 5-amino-6-(D-ribitylamino)uracil = 6,7-dimethyl-8-(1-D-ribityl)lumazine + phosphate + 2 H2O + H(+). The protein operates within cofactor biosynthesis; riboflavin biosynthesis; riboflavin from 2-hydroxy-3-oxobutyl phosphate and 5-amino-6-(D-ribitylamino)uracil: step 1/2. In terms of biological role, catalyzes the formation of 6,7-dimethyl-8-ribityllumazine by condensation of 5-amino-6-(D-ribitylamino)uracil with 3,4-dihydroxy-2-butanone 4-phosphate. This is the penultimate step in the biosynthesis of riboflavin. The sequence is that of 6,7-dimethyl-8-ribityllumazine synthase from Burkholderia ambifaria (strain MC40-6).